We begin with the raw amino-acid sequence, 116 residues long: Transcription initiation factor IIA subunit 2 (116 aa).

Belongs to the TFIIA subunit 2 family. TFIIA is a heterodimer composed of the large TOA1 and the small TOA2 subunits.

It is found in the nucleus. TFIIA is a component of the transcription machinery of RNA polymerase II and plays an important role in transcriptional activation. TFIIA in a complex with tbp mediates transcriptional activity. This Pyricularia oryzae (strain 70-15 / ATCC MYA-4617 / FGSC 8958) (Rice blast fungus) protein is Transcription initiation factor IIA subunit 2 (TOA2).